The sequence spans 283 residues: Xyloglucan endotransglucosylase/hydrolase 2 (283 aa).

Positions 1–30 (MAPSSAHNNGFYVLMLVGIVVSTMVATCAG) are cleaved as a signal peptide. Residues 31-220 (SFYQDFDLTW…WSKAPFTAYY (190 aa)) enclose the GH16 domain. The active-site Nucleophile is the Glu-106. The active-site Proton donor is Glu-110. Residue Glu-110 participates in xyloglucan binding. A glycan (N-linked (GlcNAc...) asparagine) is linked at Asn-114. Xyloglucan contacts are provided by residues 123-125 (HTN), 133-135 (NRE), 199-200 (DW), Gly-204, and Arg-272. The cysteines at positions 267 and 281 are disulfide-linked.

Belongs to the glycosyl hydrolase 16 family. Post-translationally, contains at least one intrachain disulfide bond essential for its enzymatic activity. N-glycosylated; not essential for its enzymatic activity.

Its subcellular location is the secreted. It localises to the cell wall. It is found in the extracellular space. The protein resides in the apoplast. It carries out the reaction breaks a beta-(1-&gt;4) bond in the backbone of a xyloglucan and transfers the xyloglucanyl segment on to O-4 of the non-reducing terminal glucose residue of an acceptor, which can be a xyloglucan or an oligosaccharide of xyloglucan.. Its function is as follows. Catalyzes xyloglucan endohydrolysis (XEH) and/or endotransglycosylation (XET). Cleaves and religates xyloglucan polymers, an essential constituent of the primary cell wall, and thereby participates in cell wall construction of growing tissues. The sequence is that of Xyloglucan endotransglucosylase/hydrolase 2 from Glycine max (Soybean).